A 258-amino-acid chain; its full sequence is Pimeloyl-[acyl-carrier protein] methyl ester esterase (258 aa).

Substrate-binding positions include tryptophan 22, 84–85 (SL), and 145–149 (FLAIQ). The active-site Nucleophile is the serine 84. Catalysis depends on residues aspartate 209 and histidine 238. Histidine 238 lines the substrate pocket.

This sequence belongs to the AB hydrolase superfamily. Carboxylesterase BioH family. Monomer.

Its subcellular location is the cytoplasm. The enzyme catalyses 6-carboxyhexanoyl-[ACP] methyl ester + H2O = 6-carboxyhexanoyl-[ACP] + methanol + H(+). Its pathway is cofactor biosynthesis; biotin biosynthesis. Functionally, the physiological role of BioH is to remove the methyl group introduced by BioC when the pimeloyl moiety is complete. It allows to synthesize pimeloyl-ACP via the fatty acid synthetic pathway through the hydrolysis of the ester bonds of pimeloyl-ACP esters. This is Pimeloyl-[acyl-carrier protein] methyl ester esterase from Pseudoalteromonas atlantica (strain T6c / ATCC BAA-1087).